The sequence spans 548 residues: Tyrosine-protein phosphatase non-receptor type 61F (548 aa).

Over 1 to 525 (MSEQKTSGSG…KQLAAKKRRS (525 aa)) the chain is Cytoplasmic. The Tyrosine-protein phosphatase domain occupies 33-296 (FYKEICETCD…DFSYQAIIEG (264 aa)). The tract at residues 46-65 (KEKQFSTSESERHTNRGLNR) is disordered. Ser-83 bears the Phosphoserine mark. A Phosphotyrosine modification is found at Tyr-86. Residues Asp-203, 237-243 (CSAGIGR), and Gln-281 contribute to the substrate site. The active-site Phosphocysteine intermediate is Cys-237. 3 consecutive short sequence motifs (PXXP motif (SH3-binding)) follow at residues 327–330 (PPLP), 339–342 (PLAP), and 394–397 (PPLP). The disordered stretch occupies residues 386 to 517 (EVADSRPLPP…RKQRENEDKQ (132 aa)). The span at 404-428 (SDSDEDYLLDDDDEDDTDEDEEYET) shows a compositional bias: acidic residues. 2 consecutive short sequence motifs (PXXP motif (SH3-binding)) follow at residues 459–462 (PAVP) and 480–483 (PASP). A compositionally biased stretch (basic and acidic residues) spans 502 to 517 (KVNDMKRKQRENEDKQ). Residues 526-545 (LLTYIAAGVVVGVICAYAYT) form a helical membrane-spanning segment. The Extracellular portion of the chain corresponds to 546–548 (KLG).

It belongs to the protein-tyrosine phosphatase family. Non-receptor class 1 subfamily. In terms of assembly, interacts (via C-terminus) with dock/dreadlocks; this interaction is independent of insulin stimulation and is required for dephosphorylation of the insulin-like receptor InR.

Its subcellular location is the cytoplasm. It localises to the membrane. The protein resides in the endomembrane system. The protein localises to the nucleus. The enzyme catalyses O-phospho-L-tyrosyl-[protein] + H2O = L-tyrosyl-[protein] + phosphate. In terms of biological role, non-receptor protein tyrosine phosphatase. Required for maintaining dock/dreadlocks in its non-phosphorylated state. Negative regulator of InR/insulin-like receptor signaling through dephosphorylation of tyrosines when recruited by dock/dreadlocks. In Drosophila melanogaster (Fruit fly), this protein is Tyrosine-protein phosphatase non-receptor type 61F.